The primary structure comprises 265 residues: Undecaprenyl-diphosphatase 1 (265 aa).

7 helical membrane-spanning segments follow: residues 4–24 (IITA…PISS), 42–62 (AKTF…ILYH), 84–104 (FHVF…HDII), 108–128 (LFQP…MIFA), 184–204 (SEFS…LDLL), 217–237 (MFAV…VTFL), and 245–265 (LKPF…FVLL).

This sequence belongs to the UppP family.

It localises to the cell membrane. The catalysed reaction is di-trans,octa-cis-undecaprenyl diphosphate + H2O = di-trans,octa-cis-undecaprenyl phosphate + phosphate + H(+). Catalyzes the dephosphorylation of undecaprenyl diphosphate (UPP). Confers resistance to bacitracin. This Bacillus thuringiensis subsp. konkukian (strain 97-27) protein is Undecaprenyl-diphosphatase 1.